The chain runs to 93 residues: Putative hemolysin E-like protein (93 aa).

The protein belongs to the hemolysin E family.

This Escherichia coli O6:H1 (strain CFT073 / ATCC 700928 / UPEC) protein is Putative hemolysin E-like protein.